Consider the following 467-residue polypeptide: Asparagine--tRNA ligase (467 aa).

Belongs to the class-II aminoacyl-tRNA synthetase family. As to quaternary structure, homodimer.

The protein localises to the cytoplasm. The catalysed reaction is tRNA(Asn) + L-asparagine + ATP = L-asparaginyl-tRNA(Asn) + AMP + diphosphate + H(+). This Phocaeicola vulgatus (strain ATCC 8482 / DSM 1447 / JCM 5826 / CCUG 4940 / NBRC 14291 / NCTC 11154) (Bacteroides vulgatus) protein is Asparagine--tRNA ligase.